The following is a 152-amino-acid chain: MFRGASAINLDTKGRIAIPVRYREPLQLEHQGRIVITVDIQSACLLLYPIHEWELIEAKLLKFSDTDKTQRSLKRLLLGYAHEVELDGNGRILLPPPLRQYANLDKRIMLVGQLNKFELWDEQSWLQQIDECQETIRSEELASNERLADFSL.

2 SpoVT-AbrB domains span residues 5 to 52 (ASAI…PIHE) and 81 to 124 (AHEV…DEQS).

Belongs to the MraZ family. In terms of assembly, forms oligomers.

Its subcellular location is the cytoplasm. The protein resides in the nucleoid. This is Transcriptional regulator MraZ from Shewanella baltica (strain OS195).